Here is a 734-residue protein sequence, read N- to C-terminus: Oligopeptide transporter 2 (734 aa).

14 helical membrane passes run 44–64, 68–88, 125–145, 152–172, 211–231, 252–272, 283–303, 359–379, 414–434, 442–462, 525–545, 596–616, 644–664, and 677–697; these read MWFL…FFGY, PLMI…KLMA, GAGF…IMAF, FLAS…WAGI, FFVI…YLFL, LGSG…SVIA, FFAI…VIPI, FFAI…THVA, WWFY…CIFM, WWGL…VSII, MFLV…SVAW, YPAL…VWLL, ATSV…YFVF, and VLSA…YFSL.

This sequence belongs to the oligopeptide OPT transporter (TC 2.A.67.1) family. As to expression, expressed in flowers, leaves, roots, and stems.

The protein localises to the membrane. Its function is as follows. Involved in the translocation of tetra- and pentapeptides across the cellular membrane in an energy-dependent manner. The protein is Oligopeptide transporter 2 (OPT2) of Arabidopsis thaliana (Mouse-ear cress).